Reading from the N-terminus, the 135-residue chain is ATP synthase epsilon chain (135 aa).

The protein belongs to the ATPase epsilon chain family. F-type ATPases have 2 components, CF(1) - the catalytic core - and CF(0) - the membrane proton channel. CF(1) has five subunits: alpha(3), beta(3), gamma(1), delta(1), epsilon(1). CF(0) has three main subunits: a, b and c.

It is found in the cell inner membrane. In terms of biological role, produces ATP from ADP in the presence of a proton gradient across the membrane. This is ATP synthase epsilon chain from Brucella suis (strain ATCC 23445 / NCTC 10510).